Consider the following 529-residue polypeptide: Listeriolysin O (529 aa).

The N-terminal stretch at 1–24 (MKKIMLVFITLILVSLPIAQQTEA) is a signal peptide. The next 4 beta stranded transmembrane spans lie at 214–227 (ESQLIAKFGTAFKA), 234–243 (VNFGAISEGK), 312–321 (STKVKAAFDA), and 329–341 (SGDVELTNIIKNS). Positions 483-493 (ECTGLAWEWWR) match the Conserved undecapeptide motif. Residues 515-516 (TL) carry the Cholesterol binding motif.

The protein belongs to the cholesterol-dependent cytolysin family. As to quaternary structure, homooligomeric pore complex of 35 to 50 subunits; when inserted in the host membrane.

The protein localises to the secreted. Its subcellular location is the host membrane. The protein resides in the host cell membrane. With respect to regulation, activity of listeriolysin O is regulated on multiple levels. It should be high in the phagosome, thereby allowing escape of the bacteria from the phagosomal compartment. Then, once inside the host cytosol, the activity must be controlled to prevent lysis of the host plasma membrane and loss of the intracellular environment. In terms of biological role, a cholesterol-dependent toxin that causes cytolysis by forming pores in cholesterol containing host membranes. After binding to target membranes, the protein undergoes a major conformation change, leading to its insertion in the host membrane and formation of an oligomeric pore complex. Cholesterol is required for binding to host membranes, membrane insertion and pore formation; cholesterol binding is mediated by a Thr-Leu pair in the C-terminus. Acts as a major virulence factor required for the escape of bacteria from phagosomal vacuoles and entry into the host cytosol. Can be reversibly inactivated by oxidation. The protein is Listeriolysin O (hly) of Listeria monocytogenes serotype 4b (strain F2365).